Here is a 206-residue protein sequence, read N- to C-terminus: LexA repressor (206 aa).

Positions 28–48 form a DNA-binding region, H-T-H motif; the sequence is RAEIARRLGFKSANAAEEHLK. Active-site for autocatalytic cleavage activity residues include S123 and K160.

Belongs to the peptidase S24 family. In terms of assembly, homodimer.

The catalysed reaction is Hydrolysis of Ala-|-Gly bond in repressor LexA.. Represses a number of genes involved in the response to DNA damage (SOS response), including recA and lexA. In the presence of single-stranded DNA, RecA interacts with LexA causing an autocatalytic cleavage which disrupts the DNA-binding part of LexA, leading to derepression of the SOS regulon and eventually DNA repair. This chain is LexA repressor, found in Shewanella pealeana (strain ATCC 700345 / ANG-SQ1).